We begin with the raw amino-acid sequence, 360 residues long: DNA replication and repair protein RecF (360 aa).

Residue 30–37 coordinates ATP; that stretch reads GANGSGKT.

This sequence belongs to the RecF family.

Its subcellular location is the cytoplasm. The RecF protein is involved in DNA metabolism; it is required for DNA replication and normal SOS inducibility. RecF binds preferentially to single-stranded, linear DNA. It also seems to bind ATP. This Acinetobacter baumannii (strain ATCC 17978 / DSM 105126 / CIP 53.77 / LMG 1025 / NCDC KC755 / 5377) protein is DNA replication and repair protein RecF.